Consider the following 282-residue polypeptide: D-alanine aminotransferase (282 aa).

Residue Tyr-32 coordinates substrate. Residue Arg-51 participates in pyridoxal 5'-phosphate binding. Arg-99 and His-101 together coordinate substrate. The Proton acceptor role is filled by Lys-146. At Lys-146 the chain carries N6-(pyridoxal phosphate)lysine. Glu-178 is a pyridoxal 5'-phosphate binding site.

The protein belongs to the class-IV pyridoxal-phosphate-dependent aminotransferase family. In terms of assembly, homodimer. Requires pyridoxal 5'-phosphate as cofactor.

The catalysed reaction is D-alanine + 2-oxoglutarate = D-glutamate + pyruvate. Acts on the D-isomers of alanine, leucine, aspartate, glutamate, aminobutyrate, norvaline and asparagine. The enzyme transfers an amino group from a substrate D-amino acid to the pyridoxal phosphate cofactor to form pyridoxamine and an alpha-keto acid in the first half-reaction. The second half-reaction is the reverse of the first, transferring the amino group from the pyridoxamine to a second alpha-keto acid to form the product D-amino acid via a ping-pong mechanism. This is an important process in the formation of D-alanine and D-glutamate, which are essential bacterial cell wall components. In Staphylococcus epidermidis (strain ATCC 35984 / DSM 28319 / BCRC 17069 / CCUG 31568 / BM 3577 / RP62A), this protein is D-alanine aminotransferase (dat).